The chain runs to 162 residues: Zinc finger protein 593 homolog (162 aa).

A C2H2-type zinc finger spans residues 59–83; that stretch reads FYCVHCAKYFIDDTAMQAHFRTKVH. The segment at 110 to 162 is disordered; sequence VKPKKRAMETQPSKEDVVAGKRIRVEVVPEDTDATDSPSTSKTKRKKVEKMET. Positions 115-136 are enriched in basic and acidic residues; that stretch reads RAMETQPSKEDVVAGKRIRVEV. Basic residues predominate over residues 151 to 162; it reads KTKRKKVEKMET.

This sequence belongs to the ZNF593/BUD20 C2H2-type zinc-finger protein family. Associates with pre-60S ribosomal particles; released from the pre-60S particle very early in the cytoplasm.

The protein resides in the nucleus. It is found in the cytoplasm. Involved in pre-60S ribosomal particles maturation by promoting the nuclear export of the 60S ribosome. This chain is Zinc finger protein 593 homolog, found in Drosophila melanogaster (Fruit fly).